A 460-amino-acid chain; its full sequence is Benzyl alcohol O-benzoyltransferase (460 aa).

Catalysis depends on proton acceptor residues H167 and D382.

The protein belongs to the plant acyltransferase family.

It carries out the reaction benzyl alcohol + benzoyl-CoA = benzyl benzoate + CoA. Its function is as follows. Probably involved in the formation of volatile ester benzylbenzoate. This Nicotiana tabacum (Common tobacco) protein is Benzyl alcohol O-benzoyltransferase (HSR201).